Consider the following 400-residue polypeptide: Bifunctional enzyme IspD/IspF (400 aa).

The tract at residues 1-240 (MQESTMKFGI…EKLSHALPDV (240 aa)) is 2-C-methyl-D-erythritol 4-phosphate cytidylyltransferase. The segment at 241 to 400 (RTGNGYDVHQ…ATVVYQGRPL (160 aa)) is 2-C-methyl-D-erythritol 2,4-cyclodiphosphate synthase. A divalent metal cation-binding residues include Asp247 and His249. 4-CDP-2-C-methyl-D-erythritol 2-phosphate is bound by residues 247 to 249 (DVH) and 273 to 274 (HS). His281 lines the a divalent metal cation pocket. 4-CDP-2-C-methyl-D-erythritol 2-phosphate-binding positions include 295–297 (DIG), 371–374 (TTNE), Phe378, and Arg381.

It in the N-terminal section; belongs to the IspD/TarI cytidylyltransferase family. IspD subfamily. This sequence in the C-terminal section; belongs to the IspF family. The cofactor is a divalent metal cation.

The catalysed reaction is 2-C-methyl-D-erythritol 4-phosphate + CTP + H(+) = 4-CDP-2-C-methyl-D-erythritol + diphosphate. It catalyses the reaction 4-CDP-2-C-methyl-D-erythritol 2-phosphate = 2-C-methyl-D-erythritol 2,4-cyclic diphosphate + CMP. It functions in the pathway isoprenoid biosynthesis; isopentenyl diphosphate biosynthesis via DXP pathway; isopentenyl diphosphate from 1-deoxy-D-xylulose 5-phosphate: step 2/6. It participates in isoprenoid biosynthesis; isopentenyl diphosphate biosynthesis via DXP pathway; isopentenyl diphosphate from 1-deoxy-D-xylulose 5-phosphate: step 4/6. In terms of biological role, bifunctional enzyme that catalyzes the formation of 4-diphosphocytidyl-2-C-methyl-D-erythritol from CTP and 2-C-methyl-D-erythritol 4-phosphate (MEP) (IspD), and catalyzes the conversion of 4-diphosphocytidyl-2-C-methyl-D-erythritol 2-phosphate (CDP-ME2P) to 2-C-methyl-D-erythritol 2,4-cyclodiphosphate (ME-CPP) with a corresponding release of cytidine 5-monophosphate (CMP) (IspF). This Agrobacterium fabrum (strain C58 / ATCC 33970) (Agrobacterium tumefaciens (strain C58)) protein is Bifunctional enzyme IspD/IspF.